Consider the following 354-residue polypeptide: Protein-glutamate methylesterase/protein-glutamine glutaminase (354 aa).

A Response regulatory domain is found at 6–123 (RVLIVDDSAV…SQSLETLSAA (118 aa)). Asp-57 is subject to 4-aspartylphosphate. Residues 159 to 351 (ARTTHQLLAV…GDLLKQLQTR (193 aa)) form the CheB-type methylesterase domain. Active-site residues include Ser-171, His-197, and Asp-293.

The protein belongs to the CheB family. In terms of processing, phosphorylated by CheA. Phosphorylation of the N-terminal regulatory domain activates the methylesterase activity.

The protein resides in the cytoplasm. The enzyme catalyses [protein]-L-glutamate 5-O-methyl ester + H2O = L-glutamyl-[protein] + methanol + H(+). It carries out the reaction L-glutaminyl-[protein] + H2O = L-glutamyl-[protein] + NH4(+). In terms of biological role, involved in chemotaxis. Part of a chemotaxis signal transduction system that modulates chemotaxis in response to various stimuli. Catalyzes the demethylation of specific methylglutamate residues introduced into the chemoreceptors (methyl-accepting chemotaxis proteins or MCP) by CheR. Also mediates the irreversible deamidation of specific glutamine residues to glutamic acid. The polypeptide is Protein-glutamate methylesterase/protein-glutamine glutaminase (Bdellovibrio bacteriovorus (strain ATCC 15356 / DSM 50701 / NCIMB 9529 / HD100)).